The chain runs to 156 residues: Small ribosomal subunit protein uS7 (156 aa).

Belongs to the universal ribosomal protein uS7 family. As to quaternary structure, part of the 30S ribosomal subunit. Contacts proteins S9 and S11.

Its function is as follows. One of the primary rRNA binding proteins, it binds directly to 16S rRNA where it nucleates assembly of the head domain of the 30S subunit. Is located at the subunit interface close to the decoding center, probably blocks exit of the E-site tRNA. The polypeptide is Small ribosomal subunit protein uS7 (Nitrosospira multiformis (strain ATCC 25196 / NCIMB 11849 / C 71)).